We begin with the raw amino-acid sequence, 301 residues long: Homoserine O-acetyltransferase (301 aa).

The Acyl-thioester intermediate role is filled by cysteine 142. Lysine 163 and serine 192 together coordinate substrate. Histidine 235 (proton acceptor) is an active-site residue. Glutamate 237 is a catalytic residue. Arginine 249 provides a ligand contact to substrate.

This sequence belongs to the MetA family.

The protein localises to the cytoplasm. It catalyses the reaction L-homoserine + acetyl-CoA = O-acetyl-L-homoserine + CoA. It participates in amino-acid biosynthesis; L-methionine biosynthesis via de novo pathway; O-acetyl-L-homoserine from L-homoserine: step 1/1. Transfers an acetyl group from acetyl-CoA to L-homoserine, forming acetyl-L-homoserine. This Clostridium acetobutylicum (strain ATCC 824 / DSM 792 / JCM 1419 / IAM 19013 / LMG 5710 / NBRC 13948 / NRRL B-527 / VKM B-1787 / 2291 / W) protein is Homoserine O-acetyltransferase.